A 230-amino-acid chain; its full sequence is Germin-like protein 5-1 (230 aa).

A signal peptide spans 1–20; the sequence is MAMVGRSLLLLLLLVTLAAG. A disulfide bond links Cys-38 and Cys-53. The 134-residue stretch at 86–219 folds into the Cupin type-1 domain; it reads YGFTARSVDI…TLLTDEATVD (134 aa). Mn(2+) is bound by residues His-119, His-121, Glu-126, and His-167. An N-linked (GlcNAc...) asparagine glycan is attached at Asn-172.

This sequence belongs to the germin family. In terms of assembly, oligomer (believed to be a pentamer but probably hexamer).

The protein resides in the secreted. Its subcellular location is the extracellular space. It localises to the apoplast. Functionally, may play a role in plant defense. Probably has no oxalate oxidase activity even if the active site is conserved. This chain is Germin-like protein 5-1, found in Oryza sativa subsp. japonica (Rice).